The following is a 135-amino-acid chain: Large ribosomal subunit protein bL19 (135 aa).

The protein belongs to the bacterial ribosomal protein bL19 family.

Its function is as follows. This protein is located at the 30S-50S ribosomal subunit interface and may play a role in the structure and function of the aminoacyl-tRNA binding site. This chain is Large ribosomal subunit protein bL19, found in Xanthomonas euvesicatoria pv. vesicatoria (strain 85-10) (Xanthomonas campestris pv. vesicatoria).